The sequence spans 91 residues: Non-hemolytic enterotoxin 105 kDa component (91 aa).

Zn(2+) is required as a cofactor.

The protein resides in the secreted. This protein is a metalloprotease with gelatinolytic and collagenolytic activity and is a component of the non-hemolytic enterotoxin complex (NHE). The sequence is that of Non-hemolytic enterotoxin 105 kDa component from Bacillus cereus.